Here is a 95-residue protein sequence, read N- to C-terminus: Putative defensin-like protein 262 (95 aa).

An N-terminal signal peptide occupies residues 1-26 (MEKTSLKLIFLFSLTVIAFCSSLGDA). Intrachain disulfides connect C48-C95, C64-C83, C70-C91, and C74-C93.

The protein belongs to the DEFL family.

The protein resides in the secreted. The polypeptide is Putative defensin-like protein 262 (Arabidopsis thaliana (Mouse-ear cress)).